The chain runs to 370 residues: Aminomethyltransferase (370 aa).

It belongs to the GcvT family. The glycine cleavage system is composed of four proteins: P, T, L and H.

It carries out the reaction N(6)-[(R)-S(8)-aminomethyldihydrolipoyl]-L-lysyl-[protein] + (6S)-5,6,7,8-tetrahydrofolate = N(6)-[(R)-dihydrolipoyl]-L-lysyl-[protein] + (6R)-5,10-methylene-5,6,7,8-tetrahydrofolate + NH4(+). Functionally, the glycine cleavage system catalyzes the degradation of glycine. The sequence is that of Aminomethyltransferase from Prochlorococcus marinus (strain MIT 9215).